The primary structure comprises 1488 residues: Chromosome partition protein MukB (1488 aa).

ATP is bound at residue 34 to 41 (GGNGAGKS). Coiled-coil stretches lie at residues 326–418 (LEAD…QYNQ), 444–472 (LDTF…QTAH), and 509–602 (RHLA…QRAP). Residues 666 to 783 (PGGAEDQRLN…SLPIFGRAAR (118 aa)) are flexible hinge. Coiled coils occupy residues 835–923 (EAEI…AKLE), 977–1116 (EMLS…AKAG), and 1209–1265 (VEAI…LQSV).

It belongs to the SMC family. MukB subfamily. Homodimerization via its hinge domain. Binds to DNA via its C-terminal region. Interacts, and probably forms a ternary complex, with MukE and MukF via its C-terminal region. The complex formation is stimulated by calcium or magnesium. Interacts with tubulin-related protein FtsZ.

The protein resides in the cytoplasm. The protein localises to the nucleoid. Its function is as follows. Plays a central role in chromosome condensation, segregation and cell cycle progression. Functions as a homodimer, which is essential for chromosome partition. Involved in negative DNA supercoiling in vivo, and by this means organize and compact chromosomes. May achieve or facilitate chromosome segregation by condensation DNA from both sides of a centrally located replisome during cell division. In Salmonella paratyphi B (strain ATCC BAA-1250 / SPB7), this protein is Chromosome partition protein MukB.